Reading from the N-terminus, the 345-residue chain is Aminopeptidase YpdE (345 aa).

Residues H62 and D166 each coordinate a divalent metal cation. E198 serves as the catalytic Proton acceptor. Residues E199, D221, and H308 each coordinate a divalent metal cation.

The protein belongs to the peptidase M42 family. It depends on Co(2+) as a cofactor. Requires Ni(2+) as cofactor. Mn(2+) is required as a cofactor. The cofactor is Cu(2+).

In terms of biological role, has a broad aminopeptidase activity on non-blocked peptides by progressively cleaving amino acids off the peptide substrate. Aminopeptidase activity stops at the residue before the first proline in the peptide. Cannot cleave when proline is the first N-terminal residue. The sequence is that of Aminopeptidase YpdE (ypdE) from Escherichia coli (strain K12).